Consider the following 109-residue polypeptide: Elongin-C (109 aa).

It belongs to the SKP1 family.

The protein localises to the nucleus. Functionally, SIII, also known as elongin, is a general transcription elongation factor that increases the RNA polymerase II transcription elongation past template-encoded arresting sites. Subunit A is transcriptionally active and its transcription activity is strongly enhanced by binding to the dimeric complex of the SIII regulatory subunits B and C (elongin BC complex). Its function is as follows. The elongin BC complex seems to be involved as an adapter protein in the proteasomal degradation of target proteins via different E3 ubiquitin ligase complexes. In Dictyostelium discoideum (Social amoeba), this protein is Elongin-C (tceb1).